A 357-amino-acid chain; its full sequence is Glutamine synthetase root isozyme 5 (357 aa).

The GS beta-grasp domain maps to 19–99 (IIAEYIWVGG…VMCDCYTPQG (81 aa)). The GS catalytic domain occupies 106-357 (KRYKAATVFS…ADTTILWKGN (252 aa)).

This sequence belongs to the glutamine synthetase family. As to quaternary structure, homooctamer. Found mainly in the cortical tissues of seedling roots, stem and seedling shoot.

The protein resides in the cytoplasm. The catalysed reaction is L-glutamate + NH4(+) + ATP = L-glutamine + ADP + phosphate + H(+). In terms of biological role, plays a role in the flow of nitrogen into nitrogenous organic compounds. This is Glutamine synthetase root isozyme 5 (GS1-5) from Zea mays (Maize).